Here is a 72-residue protein sequence, read N- to C-terminus: PAMP-induced secreted peptide 1 (72 aa).

The signal sequence occupies residues 1-30 (MRRVSWSTVLIVVVMVSLFFVEHVVVPAAA). Proline 65 and proline 67 each carry 4-hydroxyproline.

Contains 4-hydroxyproline; hydroxylated on Pro-65 and Pro-67. As to expression, expressed in guard cells, hydathodes, leaf trichomes, and vascular tissues of leaves and roots.

It localises to the secreted. It is found in the extracellular space. The protein resides in the apoplast. Functionally, endogenous secreted peptide that acts as elicitor of immune response and positive regulator of defense response. Amplifies the immune response triggered by flg22, the active epitope of bacterial flagellin. Acts as a negative regulator of root growth. The chain is PAMP-induced secreted peptide 1 from Arabidopsis thaliana (Mouse-ear cress).